A 435-amino-acid polypeptide reads, in one-letter code: Aspartate aminotransferase (435 aa).

Residues Tyr-69 and 100–101 (SL) each bind pyridoxal 5'-phosphate. 139-141 (YDR) provides a ligand contact to substrate. Residues Asn-189, Tyr-221, and 254–256 (STS) contribute to the pyridoxal 5'-phosphate site. Substrate is bound at residue Arg-392.

It belongs to the class-I pyridoxal-phosphate-dependent aminotransferase family. Pyridoxal 5'-phosphate is required as a cofactor.

The enzyme catalyses L-aspartate + 2-oxoglutarate = oxaloacetate + L-glutamate. In terms of biological role, main aspartate aminotransferase that couples nitrogen assimilation to aspartate synthesis. Has a weak, but significant, side activity toward kynurenine (Kyn). Oxaloacetate and 2-oxoglutarate, but not pyruvate, serve as amino acceptors, while Asp, Glu and Kyn serve as the best amino donors. Essential for axenic growth and survival of M.tuberculosis in macrophages and in mice. In Mycobacterium tuberculosis (strain ATCC 25618 / H37Rv), this protein is Aspartate aminotransferase.